Reading from the N-terminus, the 316-residue chain is Glutathione synthetase (316 aa).

One can recognise an ATP-grasp domain in the interval 124-310 (EKLFTAWFPE…ITGKLMDAIE (187 aa)). ATP is bound at residue 150–207 (FREEHGDVILKPLDGMGGASIFRVKENDPNVSVIIETLTNHGQNYAMAQTFVPDISNG). Residues Glu-281 and Asn-283 each contribute to the Mg(2+) site.

The protein belongs to the prokaryotic GSH synthase family. Mg(2+) serves as cofactor. Mn(2+) is required as a cofactor.

It catalyses the reaction gamma-L-glutamyl-L-cysteine + glycine + ATP = glutathione + ADP + phosphate + H(+). The protein operates within sulfur metabolism; glutathione biosynthesis; glutathione from L-cysteine and L-glutamate: step 2/2. The protein is Glutathione synthetase of Vibrio parahaemolyticus serotype O3:K6 (strain RIMD 2210633).